The sequence spans 454 residues: MFQTVTAPTGVWRGRVTGDVTVFHGIQYARADRFAPPQRCEPQLQHLVEVPEPGPIAPQSPSRLEGVMGAPSSLKQSEACLTVTVTTPHLAQPGSLPVLVWLHGGAFLSGSGAWEQYGAEQLVRETGIVVVSVNYRLGVLGYLCAPGISSGNLGLLDQITALEWVRDNIEAFGGDNGRVTLDGQSAGAHSIVAMLGIDRARSLFSRAIIQSAPLGLGFHSVEQARRAAEIFEEELGSDPRRAVVTDILAAQARTAHRLAGRGAMNSAPPFLPVHGMAPLPFVGEWNGKVAANAARRKILIGNTRDEMAAFFGPHPVFSAMRRVPLAGPQLAGAIQRRVQKVVFDNPVQEFADRFASAGASVWRYGIGPLHPDNPFGACHCIDIPLLFGDGDTWRDAPMLRPLSPKEIGESGTRTRRYWGEFVHTGRISDPAWPMHRPKSRYAHLLTDETIGGSA.

S185 serves as the catalytic Acyl-ester intermediate. Active-site charge relay system residues include E306 and H379.

Belongs to the type-B carboxylesterase/lipase family.

The enzyme catalyses N-octanoylanthranilate + H2O = anthranilate + octanoate + H(+). Its function is as follows. Involved in the degradation of the Pseudomonas aeruginosa quorum sensing signal molecules HHQ (2-heptyl-4-quinolone) and PQS (2-heptyl-3-hydroxy-4-quinolone) to anthranilic acid. Probably catalyzes the hydrolysis of N-octanoylanthranilic acid to anthranilic acid. In Rhodococcus erythropolis (Arthrobacter picolinophilus), this protein is Probable N-octanoylanthranilate hydrolase AqdA2.